Here is a 350-residue protein sequence, read N- to C-terminus: Inhibitor of nuclear factor kappa-B kinase-interacting protein (350 aa).

Basic residues predominate over residues 1–11 (MSEVKSRKKSG). The tract at residues 1-39 (MSEVKSRKKSGPKGAPAAEPGKRSEGGKTPVARSSGGGG) is disordered. A helical transmembrane segment spans residues 46 to 62 (CLSLLSLGTCLGLAWFV). The N-linked (GlcNAc...) asparagine glycan is linked to asparagine 144. A coiled-coil region spans residues 184–217 (GLVTDVISLTDSVQELENKIEKVEKNTVKNIGDL). The N-linked (GlcNAc...) asparagine glycan is linked to asparagine 328.

Post-translationally, N-glycosylated. Isoform 4 is glycosylated at Asn-154. Expressed in vein endothelial cells. Isoform 4 is expressed in lung, kidney, spleen, thymus and skeletal muscle.

It localises to the endoplasmic reticulum membrane. Its function is as follows. Target of p53/TP53 with pro-apoptotic function. The protein is Inhibitor of nuclear factor kappa-B kinase-interacting protein (IKBIP) of Homo sapiens (Human).